The sequence spans 256 residues: Probable ATP-dependent transporter slr0075 (256 aa).

Residues 6-250 enclose the ABC transporter domain; sequence LSIKNLTASV…EEKGYDFLDE (245 aa). 38-45 lines the ATP pocket; sequence GRNGSGKS.

This sequence belongs to the ABC transporter superfamily. Ycf16 family.

This is Probable ATP-dependent transporter slr0075 from Synechocystis sp. (strain ATCC 27184 / PCC 6803 / Kazusa).